Here is a 347-residue protein sequence, read N- to C-terminus: UDP-N-acetylenolpyruvoylglucosamine reductase (347 aa).

The FAD-binding PCMH-type domain maps to 15–187 (FGIEQTCSYL…TAIGLKLPKR (173 aa)). R163 is a catalytic residue. Residue S233 is the Proton donor of the active site. Residue E328 is part of the active site.

It belongs to the MurB family. FAD serves as cofactor.

Its subcellular location is the cytoplasm. The enzyme catalyses UDP-N-acetyl-alpha-D-muramate + NADP(+) = UDP-N-acetyl-3-O-(1-carboxyvinyl)-alpha-D-glucosamine + NADPH + H(+). It functions in the pathway cell wall biogenesis; peptidoglycan biosynthesis. Functionally, cell wall formation. The chain is UDP-N-acetylenolpyruvoylglucosamine reductase from Vibrio parahaemolyticus serotype O3:K6 (strain RIMD 2210633).